A 623-amino-acid chain; its full sequence is Chaperone protein HtpG (623 aa).

Positions 1–336 are a; substrate-binding; sequence MSMKGQETRG…SNDLPLNVSR (336 aa). Residues 337–551 are b; it reads EILQDSRVTQ…ADEMSTQMAK (215 aa). The tract at residues 552–623 is c; sequence LFAAAGQEAP…IRRMNKLLSA (72 aa).

The protein belongs to the heat shock protein 90 family. In terms of assembly, homodimer.

It is found in the cytoplasm. Functionally, molecular chaperone. Has ATPase activity. The polypeptide is Chaperone protein HtpG (Serratia proteamaculans (strain 568)).